A 201-amino-acid chain; its full sequence is Recombination protein RecR (201 aa).

Residues 57–72 (CKYCANFTNKDECDIC) form a C4-type zinc finger. In terms of domain architecture, Toprim spans 80-176 (TKLMIVTTNE…QIYRIGFGIP (97 aa)).

The protein belongs to the RecR family.

Its function is as follows. May play a role in DNA repair. It seems to be involved in an RecBC-independent recombinational process of DNA repair. It may act with RecF and RecO. This Ureaplasma parvum serovar 3 (strain ATCC 27815 / 27 / NCTC 11736) protein is Recombination protein RecR.